We begin with the raw amino-acid sequence, 264 residues long: Somatomedin-B and thrombospondin type-1 domain-containing protein (264 aa).

An N-terminal signal peptide occupies residues 1-20; sequence MKTLWMVLCALARLWPGALA. The SMB domain occupies 24 to 75; that stretch reads EAGRCCPGRDPACFARGWRLDRVYGTCFCDQACRLTGDCCFDYDRACPARPC. 7 disulfides stabilise this stretch: C28/C36, C28/C52, C36/C70, C50/C52, C50/C63, C56/C62, and C63/C70. The TSP type-1 domain occupies 74–125; the sequence is PCFVGEWSPWSGCAGQCQPTTRVRRRSVRQEPLNGGAPCPPLEERAGCLEYS. N227 is a glycosylation site (N-linked (GlcNAc...) asparagine).

Belongs to the thrombospondin family.

The protein resides in the secreted. It localises to the extracellular space. Its subcellular location is the extracellular matrix. The protein is Somatomedin-B and thrombospondin type-1 domain-containing protein (Sbspon) of Mus musculus (Mouse).